The primary structure comprises 338 residues: Glyceraldehyde-3-phosphate dehydrogenase (338 aa).

NAD(+) is bound by residues 12-13 (RI), aspartate 38, and serine 125. D-glyceraldehyde 3-phosphate-binding positions include 155–157 (SCT), threonine 186, 216–217 (TG), and arginine 239. Cysteine 156 acts as the Nucleophile in catalysis. Asparagine 320 contacts NAD(+).

It belongs to the glyceraldehyde-3-phosphate dehydrogenase family. Homotetramer.

It localises to the cytoplasm. It carries out the reaction D-glyceraldehyde 3-phosphate + phosphate + NAD(+) = (2R)-3-phospho-glyceroyl phosphate + NADH + H(+). The protein operates within carbohydrate degradation; glycolysis; pyruvate from D-glyceraldehyde 3-phosphate: step 1/5. Its function is as follows. Catalyzes the oxidative phosphorylation of glyceraldehyde 3-phosphate (G3P) to 1,3-bisphosphoglycerate (BPG) using the cofactor NAD. The first reaction step involves the formation of a hemiacetal intermediate between G3P and a cysteine residue, and this hemiacetal intermediate is then oxidized to a thioester, with concomitant reduction of NAD to NADH. The reduced NADH is then exchanged with the second NAD, and the thioester is attacked by a nucleophilic inorganic phosphate to produce BPG. The polypeptide is Glyceraldehyde-3-phosphate dehydrogenase (gap) (Lactobacillus delbrueckii subsp. bulgaricus).